The sequence spans 188 residues: Elongation factor P (188 aa).

This sequence belongs to the elongation factor P family.

Its subcellular location is the cytoplasm. Its pathway is protein biosynthesis; polypeptide chain elongation. Its function is as follows. Involved in peptide bond synthesis. Stimulates efficient translation and peptide-bond synthesis on native or reconstituted 70S ribosomes in vitro. Probably functions indirectly by altering the affinity of the ribosome for aminoacyl-tRNA, thus increasing their reactivity as acceptors for peptidyl transferase. The chain is Elongation factor P from Phenylobacterium zucineum (strain HLK1).